A 624-amino-acid chain; its full sequence is Phosphoenolpyruvate carboxykinase (ATP) 1 (624 aa).

The disordered stretch occupies residues Met-1 to Val-22. Gly-322 to Thr-329 lines the ATP pocket.

The protein belongs to the phosphoenolpyruvate carboxykinase (ATP) family. As to quaternary structure, homohexamer. Green leaves but not in roots or etiolated shoots.

The protein localises to the cytoplasm. It catalyses the reaction oxaloacetate + ATP = phosphoenolpyruvate + ADP + CO2. It participates in carbohydrate biosynthesis; gluconeogenesis. This Urochloa panicoides (Panic liverseed grass) protein is Phosphoenolpyruvate carboxykinase (ATP) 1 (PCK1).